We begin with the raw amino-acid sequence, 496 residues long: Fizzy-related protein homolog (496 aa).

3 disordered regions span residues 28–51, 64–88, and 105–166; these read RRTLTPASSPVSSPSKHGDRFIPS, INENEKSPSQNRKAKDATSDNGKDG, and EKVQ…SPRK. T32 is subject to Phosphothreonine. The segment covering 32 to 42 has biased composition (polar residues); it reads TPASSPVSSPS. Position 36 is a phosphoserine (S36). Positions 47 to 52 are involved in APC/FZR1 E3 ubiquitin-protein ligase complex activity; sequence RFIPSR. K69 carries the N6-acetyllysine modification. 2 stretches are compositionally biased toward basic and acidic residues: residues 76–86 and 106–126; these read KAKDATSDNGK and KVQDPQTEDRRLQPSTPEKKG. S133, S138, S146, and S151 each carry phosphoserine. Residues 146–160 show a composition bias toward polar residues; that stretch reads SPYSLSPVSNKSQKL. N6-acetyllysine is present on K159. WD repeat units lie at residues 182 to 222, 227 to 266, 269 to 306, 311 to 350, 353 to 395, 397 to 438, and 441 to 480; these read PELQ…VTRL, VEGDSVTSVGWSERGNLVAVGTHKGFVQIWDAAAGKKLSM, GHTARVGALAWNAEQLSSGSRDRMILQRDIRTPPLQSE, GHRQEVCGLKWSTDHQLLASGGNDNKLLVWNHSSLSPVQQ, EHLA…PLQC, DTGS…QVAK, and GHSYRVLYLAMSPDGEAIVTGAGDETLRFWNVFSKTRSTK.

This sequence belongs to the WD repeat CDC20/Fizzy family. In terms of assembly, the unphosphorylated form interacts with APC/C during mitosis. Interacts with NINL. Interacts (in complex with the anaphase promoting complex APC) with MAD2L2; inhibits FZR1-mediated APC/C activation. Interacts with SIRT2 and USP37. Interacts (via WD repeats) with MAK. Interacts with RBBP8/CtIP; this interaction leads to RBBP8 proteasomal degradation. Interacts with HECW2. Interacts with SASS6; the interaction is regulated by CENATAC and leads to SASS6 proteasomal degradation. Interacts (via N-terminus) with CCNF. Interacts with CDC6. Interacts with TK1 (via the KEN box). Post-translationally, acetylated. Deacetylated by SIRT2 at Lys-69 and Lys-159; deacetylation enhances the interaction of FZR1 with CDC27, leading to activation of anaphase promoting complex/cyclosome (APC/C). In terms of processing, following DNA damage, it is dephosphorylated by CDC14B in G2 phase, leading to its reassociation with the APC/C, and allowing an efficient G2 DNA damage checkpoint. Phosphorylated by MAK. Ubiquitinated by the SCF(CCNF) E3 ubiquitin-protein ligase complex; leading to its degradation by the proteasome. In terms of tissue distribution, isoform 2 is expressed at high levels in heart, liver, spleen and some cancer cell lines whereas isoform 3 is expressed only at low levels in these tissues.

The protein localises to the nucleus. It localises to the cytoplasm. It participates in protein modification; protein ubiquitination. In terms of biological role, substrate-specific adapter for the anaphase promoting complex/cyclosome (APC/C) E3 ubiquitin-protein ligase complex. Associates with the APC/C in late mitosis, in replacement of CDC20, and activates the APC/C during anaphase and telophase. The APC/C remains active in degrading substrates to ensure that positive regulators of the cell cycle do not accumulate prematurely. At the G1/S transition FZR1 is phosphorylated, leading to its dissociation from the APC/C. Following DNA damage, it is required for the G2 DNA damage checkpoint: its dephosphorylation and reassociation with the APC/C leads to the ubiquitination of PLK1, preventing entry into mitosis. Acts as an adapter for APC/C to target the DNA-end resection factor RBBP8/CtIP for ubiquitination and subsequent proteasomal degradation. Through the regulation of RBBP8/CtIP protein turnover, may play a role in DNA damage response, favoring DNA double-strand repair through error-prone non-homologous end joining (NHEJ) over error-free, RBBP8-mediated homologous recombination (HR). In Homo sapiens (Human), this protein is Fizzy-related protein homolog.